The primary structure comprises 480 residues: Cysteine--tRNA ligase (480 aa).

C31 contacts Zn(2+). Residues P33 to H43 carry the 'HIGH' region motif. Residues C211, H236, and E240 each contribute to the Zn(2+) site. The 'KMSKS' region signature appears at K269–S273. Residue K272 participates in ATP binding.

The protein belongs to the class-I aminoacyl-tRNA synthetase family. Zn(2+) is required as a cofactor.

It catalyses the reaction tRNA(Cys) + L-cysteine + ATP = L-cysteinyl-tRNA(Cys) + AMP + diphosphate. The protein is Cysteine--tRNA ligase of Encephalitozoon cuniculi (strain GB-M1) (Microsporidian parasite).